The sequence spans 147 residues: Transcriptional repressor NrdR (147 aa).

A zinc finger lies at 3–34 (CPFCGHEDTQVAETRESDEGDVIRRRRRCPSC). The ATP-cone domain occupies 49–139 (PAIVKKDGSR…VYRSFEGVDE (91 aa)).

This sequence belongs to the NrdR family. Requires Zn(2+) as cofactor.

In terms of biological role, negatively regulates transcription of bacterial ribonucleotide reductase nrd genes and operons by binding to NrdR-boxes. This Methylibium petroleiphilum (strain ATCC BAA-1232 / LMG 22953 / PM1) protein is Transcriptional repressor NrdR.